We begin with the raw amino-acid sequence, 315 residues long: Adenine deaminase (315 aa).

Zn(2+) contacts are provided by His14, His16, and His194. The active-site Proton donor is Glu197. Asp275 is a binding site for Zn(2+). Residue Asp276 coordinates substrate.

Belongs to the metallo-dependent hydrolases superfamily. Adenosine and AMP deaminases family. Adenine deaminase type 2 subfamily. Requires Zn(2+) as cofactor.

The enzyme catalyses adenine + H2O + H(+) = hypoxanthine + NH4(+). In terms of biological role, catalyzes the hydrolytic deamination of adenine to hypoxanthine. Plays an important role in the purine salvage pathway and in nitrogen catabolism. In Pseudomonas putida (strain ATCC 47054 / DSM 6125 / CFBP 8728 / NCIMB 11950 / KT2440), this protein is Adenine deaminase.